We begin with the raw amino-acid sequence, 433 residues long: Dihydroorotase (433 aa).

His63 and His65 together coordinate Zn(2+). Residues 65 to 67 (HLR) and Asn97 contribute to the substrate site. Asp155, His182, and His235 together coordinate Zn(2+). Asn283 serves as a coordination point for substrate. Asp310 contributes to the Zn(2+) binding site. Residue Asp310 is part of the active site. Substrate is bound at residue His314.

It belongs to the metallo-dependent hydrolases superfamily. DHOase family. Class I DHOase subfamily. Requires Zn(2+) as cofactor.

The catalysed reaction is (S)-dihydroorotate + H2O = N-carbamoyl-L-aspartate + H(+). It participates in pyrimidine metabolism; UMP biosynthesis via de novo pathway; (S)-dihydroorotate from bicarbonate: step 3/3. Functionally, catalyzes the reversible cyclization of carbamoyl aspartate to dihydroorotate. The protein is Dihydroorotase of Anaeromyxobacter sp. (strain K).